The chain runs to 860 residues: Receptor-like protein 31 (860 aa).

Positions 1–23 are cleaved as a signal peptide; that stretch reads MMIPSQSCFCFFFMVSFFLHTLA. Topologically, residues 24–809 are extracellular; the sequence is SPTLRHCRHD…SEPEEHVINW (786 aa). N-linked (GlcNAc...) asparagine glycans are attached at residues Asn49, Asn64, Asn88, Asn95, Asn112, Asn117, Asn154, Asn178, Asn202, and Asn213. 6 LRR repeats span residues 108 to 131, 132 to 155, 156 to 179, 181 to 202, 203 to 226, and 227 to 251; these read QHLHNLTLSNCSLYGDIPSSLGNL, FRLTLLDLSYNYLVGQVPPSIGNL, SRLTILDLWDNKLVGQLPASIGNL, QLEYLIFSHNKFSGNIPVTFSN, LTKLLVVNLYNNSFESMLPLDMSG, and FQNLDYFNVGENSFSGTLPKSLFTI. The LRR 7; degenerate repeat unit spans residues 252–276; the sequence is PSLRWANLEGNMFKGPIEFRNMYSP. 14 LRR repeats span residues 277–301, 302–325, 326–349, 350–374, 376–398, 400–419, 420–444, 446–468, 469–494, 496–517, 518–541, 543–564, 565–591, and 592–615; these read STRLQYLFLSQNKFDGPIPDTLSQY, LNLIELDLSFNNLTGSFPTFLFTI, PTLERVNLEGNHLKGPVEFGNMSS, SSSLKFLNFAQNEFNGSIPESVSQY, NLEELHLSFNNFIGTIPRSISKL, KLEYFCLEDNNMVGEVPSWL, WRLTMVALSNNSFNSFGESSEGLDE, QVQWLDLSSNSFQGPFPHWICKL, RSLEILIMSDNRFNGSIPPCLSSFMV, LTDLILRNNSLSGPLPDIFVNA, TKLLSLDVSRNKLDGVLPKSLIHC, AMQLLNVRSNKIKDKFPSWLGS, LPSLHVLILRSNEFYGTLYQPHASIGF, and QSLRVIDVSHNDLIGTLPSFYFSS. Residues Asn313, Asn346, and Asn364 are each glycosylated (N-linked (GlcNAc...) asparagine). Asn429 is a glycosylation site (N-linked (GlcNAc...) asparagine). N-linked (GlcNAc...) asparagine glycosylation is found at Asn482, Asn503, and Asn516. N-linked (GlcNAc...) asparagine glycans are attached at residues Asn642, Asn673, and Asn697. LRR repeat units follow at residues 665-690, 691-714, 716-738, and 740-763; these read INEENKVINFSGNRFSGNIPESIGLL, KELRHLNLSSNAFTGNIPQSLANL, KLEALDLSLNQLSGQIPQGLGSL, and FMSTMNFSYNFLEGPVPKSTQFQG. N-linked (GlcNAc...) asparagine glycosylation is found at Asn745 and Asn765. A helical transmembrane segment spans residues 810 to 830; that stretch reads IAAGIAYGPGVVCGLVIGHIF. At 831–860 the chain is on the cytoplasmic side; that stretch reads LSHKHECWFMEKFRRKKPKVVTRIARPSKH.

This sequence belongs to the RLP family.

It is found in the cell membrane. In Arabidopsis thaliana (Mouse-ear cress), this protein is Receptor-like protein 31.